A 205-amino-acid polypeptide reads, in one-letter code: Octanoyltransferase (205 aa).

Positions 30–205 constitute a BPL/LPL catalytic domain; the sequence is NSSDELVWLL…ILKKEFYKIF (176 aa). Substrate-binding positions include 68-75, 140-142, and 153-155; these read RGGKYTYH, AFG, and GIA. Residue Cys171 is the Acyl-thioester intermediate of the active site.

It belongs to the LipB family.

The protein resides in the cytoplasm. It carries out the reaction octanoyl-[ACP] + L-lysyl-[protein] = N(6)-octanoyl-L-lysyl-[protein] + holo-[ACP] + H(+). It participates in protein modification; protein lipoylation via endogenous pathway; protein N(6)-(lipoyl)lysine from octanoyl-[acyl-carrier-protein]: step 1/2. In terms of biological role, catalyzes the transfer of endogenously produced octanoic acid from octanoyl-acyl-carrier-protein onto the lipoyl domains of lipoate-dependent enzymes. Lipoyl-ACP can also act as a substrate although octanoyl-ACP is likely to be the physiological substrate. The polypeptide is Octanoyltransferase (Wolbachia sp. subsp. Brugia malayi (strain TRS)).